Reading from the N-terminus, the 149-residue chain is Nucleoside diphosphate kinase (149 aa).

6 residues coordinate ATP: lysine 9, phenylalanine 57, arginine 85, threonine 91, arginine 102, and asparagine 112. Residue histidine 115 is the Pros-phosphohistidine intermediate of the active site.

Belongs to the NDK family. As to quaternary structure, homotetramer. The cofactor is Mg(2+).

It is found in the cytoplasm. The catalysed reaction is a 2'-deoxyribonucleoside 5'-diphosphate + ATP = a 2'-deoxyribonucleoside 5'-triphosphate + ADP. The enzyme catalyses a ribonucleoside 5'-diphosphate + ATP = a ribonucleoside 5'-triphosphate + ADP. Major role in the synthesis of nucleoside triphosphates other than ATP. The ATP gamma phosphate is transferred to the NDP beta phosphate via a ping-pong mechanism, using a phosphorylated active-site intermediate. The chain is Nucleoside diphosphate kinase from Heliobacterium modesticaldum (strain ATCC 51547 / Ice1).